Here is a 216-residue protein sequence, read N- to C-terminus: Ras-related protein Rab-11A (216 aa).

Gly-2 carries the post-translational modification N-acetylglycine. Ser-20, Gly-21, Val-22, Gly-23, Lys-24, Ser-25, Asn-26, Asn-37, Leu-38, Ser-40, Ser-42, and Thr-43 together coordinate GTP. Ser-25 contributes to the Mg(2+) binding site. The Switch 1 signature appears at 36–47 (FNLESKSTIGVE). 2 residues coordinate Mg(2+): Thr-43 and Asp-66. The short motif at 67 to 86 (TAGQERYRAITSAYYRGAVG) is the Switch 2 element. Positions 69, 124, 125, 127, 155, and 156 each coordinate GTP. The disordered stretch occupies residues 183-208 (DRRENDMSPSNNVVPIHVPPTTENKP). S-geranylgeranyl cysteine attachment occurs at residues Cys-212 and Cys-213. Cys-213 bears the Cysteine methyl ester mark. A propeptide spans 214 to 216 (QNI) (removed in mature form).

Belongs to the small GTPase superfamily. Rab family. The cofactor is Mg(2+).

Its subcellular location is the cell membrane. It localises to the endosome membrane. It is found in the recycling endosome membrane. The protein resides in the cleavage furrow. The protein localises to the cytoplasmic vesicle. Its subcellular location is the phagosome. It localises to the cytoplasmic vesicle membrane. It is found in the golgi apparatus. The protein resides in the trans-Golgi network. The enzyme catalyses GTP + H2O = GDP + phosphate + H(+). Regulated by guanine nucleotide exchange factors (GEFs) which promote the exchange of bound GDP for free GTP. Regulated by GTPase activating proteins (GAPs) which increase the GTP hydrolysis activity. Inhibited by GDP dissociation inhibitors (GDIs) which prevent Rab-GDP dissociation. In terms of biological role, the small GTPases Rab are key regulators of intracellular membrane trafficking, from the formation of transport vesicles to their fusion with membranes. Rabs cycle between an inactive GDP-bound form and an active GTP-bound form that is able to recruit to membranes different set of downstream effectors directly responsible for vesicle formation, movement, tethering and fusion. The small Rab GTPase RAB11A regulates endocytic recycling. May also be involved in the regulation of preciliary trafficking and neosynthesized protein export. The polypeptide is Ras-related protein Rab-11A (RAB11A) (Gallus gallus (Chicken)).